The chain runs to 749 residues: Disintegrin and metalloproteinase domain-containing protein 10 (749 aa).

The N-terminal stretch at 1-19 (MVLPTVLILLLSWAAGLGG) is a signal peptide. Positions 20–214 (QYGNPLNKYI…SGPELLRKKR (195 aa)) are excised as a propeptide. At 20-673 (QYGNPLNKYI…SPQLYENIAE (654 aa)) the chain is on the extracellular side. A Cysteine switch motif is present at residues 171-178 (GGCADHSV). Cys-173 serves as a coordination point for Zn(2+). In terms of domain architecture, Peptidase M12B spans 221-457 (NTCQLYIQTD…KRNNCFVESG (237 aa)). 17 disulfide bridges follow: Cys-223–Cys-314, Cys-345–Cys-452, Cys-400–Cys-436, Cys-461–Cys-496, Cys-472–Cys-485, Cys-474–Cys-480, Cys-484–Cys-516, Cys-504–Cys-512, Cys-511–Cys-537, Cys-525–Cys-544, Cys-531–Cys-563, Cys-556–Cys-568, Cys-573–Cys-599, Cys-581–Cys-608, Cys-583–Cys-598, Cys-595–Cys-640, and Cys-633–Cys-646. 2 N-linked (GlcNAc...) asparagine glycosylation sites follow: Asn-268 and Asn-279. Zn(2+) is bound at residue His-384. The active site involves Glu-385. Residues His-388 and His-394 each contribute to the Zn(2+) site. Asn-440 carries an N-linked (GlcNAc...) asparagine glycan. The Disintegrin domain occupies 458–552 (QPICGNGMVE…LCPASDPKPN (95 aa)). Residue Asn-552 is glycosylated (N-linked (GlcNAc...) asparagine). Residues 674 to 694 (WIVAHWWAVLLMGIALIMLMA) form a helical membrane-spanning segment. Residues 695 to 749 (GFIKICSVHTPSSNPKLPPPKPLPGTLKRRRPPQPIQQPPRQRPRESYQMGHMRR) are Cytoplasmic-facing. A disordered region spans residues 705 to 749 (PSSNPKLPPPKPLPGTLKRRRPPQPIQQPPRQRPRESYQMGHMRR). Positions 709 to 716 (PKLPPPKP) match the SH3-binding motif. Position 720 is a phosphothreonine (Thr-720). An SH3-binding motif is present at residues 723–729 (RRRPPQP). Positions 735–749 (RQRPRESYQMGHMRR) are interaction with AP2A1, AP2A2 and AP2M1.

As to quaternary structure, forms a ternary EFNA5-EPHA3-ADAM10 complex mediating EFNA5 extracellular domain shedding by ADAM10 which regulates the EFNA5-EPHA3 complex internalization and function, the cleavage occurs in trans, with ADAM10 and its substrate being on the membranes of opposing cells. Interacts with the clathrin adapter AP2 complex subunits AP2A1, AP2A2, AP2B1, and AP2M1; this interaction facilitates ADAM10 endocytosis from the plasma membrane during long-term potentiation in hippocampal neurons. Forms a ternary complex composed of ADAM10, EPHA4 and CADH1; within the complex, ADAM10 cleaves CADH1 which disrupts adherens junctions. Interacts with EPHA2. Interacts with NGF in a divalent cation-dependent manner. Interacts with TSPAN14; the interaction promotes ADAM10 maturation and cell surface expression. Interacts with TSPAN5, TSPAN10, TSPAN14, TSPAN15, TSPAN17 and TSPAN33; these interactions regulate ADAM10 substrate specificity, endocytosis and turnover. Interacts (via extracellular domain) with TSPAN33 (via extracellular domain) and (via cytoplasmic domain) with AFDN; interaction with TSPAN33 allows the docking of ADAM10 to zonula adherens through a PDZ11-dependent interaction between TSPAN33 and PLEKHA7 while interaction with AFDN locks ADAM10 at zonula adherens. Interacts with DLG1; this interaction recruits ADAM10 to the cell membrane during long-term depression in hippocampal neurons. Interacts (via extracellular domain) with BACE1 (via extracellular domain). Interacts with FAM171A1. Zn(2+) is required as a cofactor. In terms of processing, the precursor is cleaved by furin and PCSK7. In terms of tissue distribution, expressed in the brain, specifically in neurons and astrocytes (at protein level). Expressed in inner and outer pillar cells of the organ of Corti (at protein level). Expressed in kidney and lung.

Its subcellular location is the cell membrane. The protein localises to the golgi apparatus membrane. It localises to the cytoplasmic vesicle. The protein resides in the clathrin-coated vesicle. It is found in the cell projection. Its subcellular location is the axon. The protein localises to the dendrite. It localises to the cell junction. The protein resides in the adherens junction. It is found in the cytoplasm. The catalysed reaction is Endopeptidase of broad specificity.. Its activity is regulated as follows. Catalytically inactive when the propeptide is intact and associated with the mature enzyme. The disintegrin and cysteine-rich regions modulate access of substrates to exerts an inhibitory effect on the cleavage of ADAM10 substrates. Its function is as follows. Transmembrane metalloprotease which mediates the ectodomain shedding of a myriad of transmembrane proteins, including adhesion proteins, growth factor precursors and cytokines being essential for development and tissue homeostasis. Associates with six members of the tetraspanin superfamily TspanC8 which regulate its exit from the endoplasmic reticulum and its substrate selectivity. Cleaves the membrane-bound precursor of TNF-alpha to its mature soluble form. Responsible for the proteolytical release of soluble JAM3 from endothelial cells surface. Responsible for the proteolytic release of several other cell-surface proteins, including heparin-binding epidermal growth-like factor, ephrin-A2, CD44, CDH2 and for constitutive and regulated alpha-secretase cleavage of amyloid precursor protein (APP) at '687-Lys-|-Leu-688'. Contributes to the normal cleavage of the cellular prion protein. Involved in the cleavage of the adhesion molecule L1 at the cell surface and in released membrane vesicles, suggesting a vesicle-based protease activity. Also controls the proteolytic processing of Notch and mediates lateral inhibition during neurogenesis. Required for the development of type 1 transitional B cells into marginal zone B cells, probably by cleaving Notch. Responsible for the FasL ectodomain shedding and for the generation of the remnant ADAM10-processed FasL (FasL APL) transmembrane form. Also cleaves the ectodomain of the integral membrane proteins CORIN and ITM2B. Mediates the proteolytic cleavage of LAG3, leading to release the secreted form of LAG3. Mediates the proteolytic cleavage of IL6R and IL11RA, leading to the release of secreted forms of IL6R and IL11RA. Enhances the cleavage of CHL1 by BACE1. Cleaves NRCAM. Cleaves TREM2, resulting in shedding of the TREM2 ectodomain. Involved in the development and maturation of glomerular and coronary vasculature. During development of the cochlear organ of Corti, promotes pillar cell separation by forming a ternary complex with CADH1 and EPHA4 and cleaving CADH1 at adherens junctions. May regulate the EFNA5-EPHA3 signaling. In Mus musculus (Mouse), this protein is Disintegrin and metalloproteinase domain-containing protein 10 (Adam10).